We begin with the raw amino-acid sequence, 156 residues long: Putative pre-16S rRNA nuclease (156 aa).

It belongs to the YqgF nuclease family.

It localises to the cytoplasm. Its function is as follows. Could be a nuclease involved in processing of the 5'-end of pre-16S rRNA. The sequence is that of Putative pre-16S rRNA nuclease from Rickettsia typhi (strain ATCC VR-144 / Wilmington).